Here is a 330-residue protein sequence, read N- to C-terminus: Taste receptor type 2 member 136 (330 aa).

The Extracellular portion of the chain corresponds to Met-1–Ala-32. Residues Gly-33–Val-53 form a helical membrane-spanning segment. The Cytoplasmic portion of the chain corresponds to Thr-54 to Ser-73. A helical membrane pass occupies residues Leu-74–Phe-94. The Extracellular segment spans residues His-95–Thr-122. A helical transmembrane segment spans residues Ile-123–Leu-143. The Cytoplasmic segment spans residues Lys-144–Ser-149. Residues Val-150–Thr-170 traverse the membrane as a helical segment. The Extracellular segment spans residues Val-171–Ser-201. N-linked (GlcNAc...) asparagine glycans are attached at residues Asn-183 and Asn-195. A helical transmembrane segment spans residues Phe-202–Tyr-222. Over Ser-223 to Lys-248 the chain is Cytoplasmic. Residues Ala-249–Ile-269 traverse the membrane as a helical segment. Residues Ser-270 to His-283 are Extracellular-facing. A helical membrane pass occupies residues Leu-284–Gly-304. The Cytoplasmic segment spans residues Asn-305–Pro-330.

This sequence belongs to the G-protein coupled receptor T2R family.

It is found in the membrane. Functionally, putative taste receptor which may play a role in the perception of bitterness. The sequence is that of Taste receptor type 2 member 136 from Rattus norvegicus (Rat).